The chain runs to 244 residues: 5-oxoprolinase subunit A (244 aa).

This sequence belongs to the LamB/PxpA family. As to quaternary structure, forms a complex composed of PxpA, PxpB and PxpC.

The catalysed reaction is 5-oxo-L-proline + ATP + 2 H2O = L-glutamate + ADP + phosphate + H(+). In terms of biological role, catalyzes the cleavage of 5-oxoproline to form L-glutamate coupled to the hydrolysis of ATP to ADP and inorganic phosphate. The polypeptide is 5-oxoprolinase subunit A (Escherichia coli O6:K15:H31 (strain 536 / UPEC)).